We begin with the raw amino-acid sequence, 212 residues long: Probable chemoreceptor glutamine deamidase CheD (212 aa).

The protein belongs to the CheD family.

It carries out the reaction L-glutaminyl-[protein] + H2O = L-glutamyl-[protein] + NH4(+). In terms of biological role, probably deamidates glutamine residues to glutamate on methyl-accepting chemotaxis receptors (MCPs), playing an important role in chemotaxis. This chain is Probable chemoreceptor glutamine deamidase CheD, found in Bordetella parapertussis (strain 12822 / ATCC BAA-587 / NCTC 13253).